The sequence spans 963 residues: Translation initiation factor IF-2 (963 aa).

The span at 53-77 (SHGQADDSARKKITLTKRETSEIRQ) shows a compositional bias: basic and acidic residues. Residues 53–377 (SHGQADDSAR…RSNFQAPTEP (325 aa)) form a disordered region. The segment covering 78-87 (SDATGKTRTV) has biased composition (polar residues). 4 stretches are compositionally biased toward basic and acidic residues: residues 98-110 (IKRDDAAPEHQAD), 123-183 (EEAR…KAEE), 197-250 (DTSR…EAEA), and 267-278 (PSERKAEEKKAE). Residues 343 to 356 (SSGGVGGWRGGPRG) are compositionally biased toward gly residues. The region spanning 463–632 (PRPPVVTVMG…SLQAEVLELK (170 aa)) is the tr-type G domain. Residues 472–479 (GHVDHGKT) form a G1 region. 472-479 (GHVDHGKT) is a GTP binding site. Residues 497 to 501 (GITQH) are G2. The interval 518–521 (DTPG) is G3. GTP contacts are provided by residues 518–522 (DTPGH) and 572–575 (NKVD). The tract at residues 572 to 575 (NKVD) is G4. A G5 region spans residues 608-610 (SAK).

Belongs to the TRAFAC class translation factor GTPase superfamily. Classic translation factor GTPase family. IF-2 subfamily.

It localises to the cytoplasm. Functionally, one of the essential components for the initiation of protein synthesis. Protects formylmethionyl-tRNA from spontaneous hydrolysis and promotes its binding to the 30S ribosomal subunits. Also involved in the hydrolysis of GTP during the formation of the 70S ribosomal complex. The polypeptide is Translation initiation factor IF-2 (Cupriavidus taiwanensis (strain DSM 17343 / BCRC 17206 / CCUG 44338 / CIP 107171 / LMG 19424 / R1) (Ralstonia taiwanensis (strain LMG 19424))).